Consider the following 439-residue polypeptide: Coiled-coil domain-containing protein 166 (439 aa).

The interval 1-28 is disordered; it reads MAPKKKRGPSAGSQPGGAAAAGAEQPLS. The span at 9 to 23 shows a compositional bias: low complexity; the sequence is PSAGSQPGGAAAAGA. Coiled-coil stretches lie at residues 27–74 and 121–213; these read LSER…EENR and DGVR…VRAL. Positions 276–439 are disordered; that stretch reads PGGPPLWERP…AAAEASPGRA (164 aa). Residues 338-365 show a composition bias toward polar residues; sequence VLSSMDSRVPSLATSKVGSRMPSLTASR. Low complexity-rich tracts occupy residues 376 to 392 and 428 to 439; these read SLEGSGISSGSSPRVSS and AEAAAEASPGRA.

This Homo sapiens (Human) protein is Coiled-coil domain-containing protein 166 (CCDC166).